The following is a 416-amino-acid chain: Serine hydroxymethyltransferase (416 aa).

Residues leucine 121 and 125–127 each bind (6S)-5,6,7,8-tetrahydrofolate; that span reads GHL. Lysine 229 bears the N6-(pyridoxal phosphate)lysine mark.

This sequence belongs to the SHMT family. Homodimer. Pyridoxal 5'-phosphate serves as cofactor.

The protein localises to the cytoplasm. The enzyme catalyses (6R)-5,10-methylene-5,6,7,8-tetrahydrofolate + glycine + H2O = (6S)-5,6,7,8-tetrahydrofolate + L-serine. It participates in one-carbon metabolism; tetrahydrofolate interconversion. It functions in the pathway amino-acid biosynthesis; glycine biosynthesis; glycine from L-serine: step 1/1. Catalyzes the reversible interconversion of serine and glycine with tetrahydrofolate (THF) serving as the one-carbon carrier. This reaction serves as the major source of one-carbon groups required for the biosynthesis of purines, thymidylate, methionine, and other important biomolecules. Also exhibits THF-independent aldolase activity toward beta-hydroxyamino acids, producing glycine and aldehydes, via a retro-aldol mechanism. The chain is Serine hydroxymethyltransferase from Neisseria gonorrhoeae.